The sequence spans 356 residues: Probable butyrate kinase (356 aa).

Belongs to the acetokinase family.

Its subcellular location is the cytoplasm. The enzyme catalyses butanoate + ATP = butanoyl phosphate + ADP. The sequence is that of Probable butyrate kinase from Coprothermobacter proteolyticus (strain ATCC 35245 / DSM 5265 / OCM 4 / BT).